Reading from the N-terminus, the 196-residue chain is Molybdenum cofactor guanylyltransferase (196 aa).

GTP-binding positions include 10-12, Lys23, Asn51, Asp69, and Asp99; that span reads LAG. Mg(2+) is bound at residue Asp99.

It belongs to the MobA family. Monomer. It depends on Mg(2+) as a cofactor.

The protein localises to the cytoplasm. It catalyses the reaction Mo-molybdopterin + GTP + H(+) = Mo-molybdopterin guanine dinucleotide + diphosphate. In terms of biological role, transfers a GMP moiety from GTP to Mo-molybdopterin (Mo-MPT) cofactor (Moco or molybdenum cofactor) to form Mo-molybdopterin guanine dinucleotide (Mo-MGD) cofactor. The protein is Molybdenum cofactor guanylyltransferase of Shewanella baltica (strain OS155 / ATCC BAA-1091).